The primary structure comprises 1032 residues: UPF0182 protein sll1060 (1032 aa).

The next 9 helical transmembrane spans lie at 27 to 49 (WVKG…RIYV), 69 to 87 (WQGS…FIVF), 144 to 166 (VLLP…YVFI), 197 to 219 (FSGM…IGVL), 226 to 248 (PGLV…FRLL), 283 to 300 (WWRG…LIIL), 321 to 339 (HISA…EHWL), 364 to 386 (LPVE…WLSV), and 406 to 428 (IIGL…LGGW).

It belongs to the UPF0182 family.

The protein resides in the cell membrane. In Synechocystis sp. (strain ATCC 27184 / PCC 6803 / Kazusa), this protein is UPF0182 protein sll1060.